We begin with the raw amino-acid sequence, 243 residues long: Large ribosomal subunit protein uL30 (243 aa).

A disordered region spans residues 1–31; that stretch reads MADKILTPESQLKKSKAQQKSAEQVAAERAA. The segment covering 18-28 has biased composition (low complexity); it reads QQKSAEQVAAE.

The protein belongs to the universal ribosomal protein uL30 family.

This is Large ribosomal subunit protein uL30 (RPL7) from Eremothecium gossypii (strain ATCC 10895 / CBS 109.51 / FGSC 9923 / NRRL Y-1056) (Yeast).